Consider the following 768-residue polypeptide: uncharacterized protein (768 aa).

It to E.coli YkiA.

This is an uncharacterized protein from Escherichia coli (strain K12).